Here is a 136-residue protein sequence, read N- to C-terminus: Magnetite biomineralization protein Mms6 (136 aa).

Over 1–85 the chain is Cytoplasmic; sequence MGEMEREGAT…AVGGTIWSGK (85 aa). The tract at residues 86-95 is GL repeat; that stretch reads GLALGLGMGL. A helical membrane pass occupies residues 86–106; that stretch reads GLALGLGMGLGAWGPLILGVV. Residues 107-136 are Lumenal-facing; it reads GAGAVYAYMKSRDIEAAQSDEEVELRDALS. An MIC, self-assembles, binds magnetite, Fe(2+) and Fe(3+) region spans residues 115–136; sequence MKSRDIEAAQSDEEVELRDALS.

Belongs to the magnetosome Mms6 family. Full length protein oligomerizes and interacts with MamA. May undergo cleavage.

It localises to the magnetosome membrane. Functionally, promotes the formation of magnetite in Fe(2+)-rich conditions, when magnetite is not readily formed. Binds both Fe(2+) and Fe(3+). May help control the production of crystals with a specific morphology. May function with MamX, MamY amd MamZ in biomineralization. The 4 genes of this operon collectively influence magnetosome size and number. The sequence is that of Magnetite biomineralization protein Mms6 from Magnetospirillum gryphiswaldense (strain DSM 6361 / JCM 21280 / NBRC 15271 / MSR-1).